We begin with the raw amino-acid sequence, 337 residues long: Integrase/recombinase (337 aa).

The region spanning 14-94 is the Core-binding (CB) domain; sequence VKVLDQLRER…ALLFFYGKVL (81 aa). The 217-residue stretch at 112–328 folds into the Tyr recombinase domain; that stretch reads RLPVVLTPDE…GGAGVRSPLD (217 aa). Catalysis depends on residues Arg-146, Lys-171, His-277, Arg-280, and His-303. The active-site O-(3'-phospho-DNA)-tyrosine intermediate is the Tyr-312.

It belongs to the 'phage' integrase family.

Its function is as follows. Putative integrase believed to be involved in the insertion of antibiotic resistance genes into plasmids and transposons. This chain is Integrase/recombinase (int), found in Escherichia coli.